Consider the following 350-residue polypeptide: Eukaryotic translation initiation factor 3 subunit I (350 aa).

WD repeat units lie at residues 8-49 (GHER…GTLE), 51-89 (HQGV…CVFT), 91-135 (ESPS…ESLT), 149-188 (QDGA…AVNS), 198-240 (EKNV…KVYK), and 296-335 (GHFG…FDFY).

This sequence belongs to the eIF-3 subunit I family. As to quaternary structure, component of the eukaryotic translation initiation factor 3 (eIF-3) complex.

The protein localises to the cytoplasm. Component of the eukaryotic translation initiation factor 3 (eIF-3) complex, which is involved in protein synthesis of a specialized repertoire of mRNAs and, together with other initiation factors, stimulates binding of mRNA and methionyl-tRNAi to the 40S ribosome. The eIF-3 complex specifically targets and initiates translation of a subset of mRNAs involved in cell proliferation. In Scheffersomyces stipitis (strain ATCC 58785 / CBS 6054 / NBRC 10063 / NRRL Y-11545) (Yeast), this protein is Eukaryotic translation initiation factor 3 subunit I.